A 533-amino-acid chain; its full sequence is D-3-phosphoglycerate dehydrogenase (533 aa).

The residue at position 2 (A2) is an N-acetylalanine. S14 is subject to Phosphoserine. K21 carries the N6-acetyllysine; alternate modification. Residue K21 forms a Glycyl lysine isopeptide (Lys-Gly) (interchain with G-Cter in SUMO1); alternate linkage. A Glycyl lysine isopeptide (Lys-Gly) (interchain with G-Cter in SUMO2); alternate cross-link involves residue K21. K58 carries the post-translational modification N6-acetyllysine. Residues T78, 155–156, D175, T207, 234–236, and D260 contribute to the NAD(+) site; these read RI and CAR. T78 carries the post-translational modification Phosphothreonine. R236 is a catalytic residue. E265 is an active-site residue. Catalysis depends on H283, which acts as the Proton donor. Position 283–286 (283–286) interacts with NAD(+); sequence HLGA.

This sequence belongs to the D-isomer specific 2-hydroxyacid dehydrogenase family. As to quaternary structure, homotetramer.

It catalyses the reaction (2R)-3-phosphoglycerate + NAD(+) = 3-phosphooxypyruvate + NADH + H(+). It carries out the reaction (R)-2-hydroxyglutarate + NAD(+) = 2-oxoglutarate + NADH + H(+). The catalysed reaction is (S)-malate + NAD(+) = oxaloacetate + NADH + H(+). The protein operates within amino-acid biosynthesis; L-serine biosynthesis; L-serine from 3-phospho-D-glycerate: step 1/3. Functionally, catalyzes the reversible oxidation of 3-phospho-D-glycerate to 3-phosphonooxypyruvate, the first step of the phosphorylated L-serine biosynthesis pathway. Also catalyzes the reversible oxidation of 2-hydroxyglutarate to 2-oxoglutarate and the reversible oxidation of (S)-malate to oxaloacetate. The protein is D-3-phosphoglycerate dehydrogenase (PHGDH) of Homo sapiens (Human).